Reading from the N-terminus, the 226-residue chain is MAFRNPIYQLSNTEDLNLDIINAPSLENSRRSSATLAVCTTEDSKFLYGTTPSGGAEWCSEGINSVRPSKRLLRRRRHVPRWISDSFRTCLPKSSGNLKEQALQPSLDRNPCRNGQADEALRNKRIGIAEPSNYWHGIIEETYDEHHQRQRNLHLIPENWQDVNLKNGLVAIIDLATDHLQCSKLIIYVDKHLPNLPYLVKSFHWVGFEPIAHPNCVDHAVFGMDL.

This sequence belongs to the ODC antizyme family. Interacts with ODC and thereby sterically blocks ODC homodimerization.

In terms of biological role, ornithine decarboxylase (ODC) antizyme protein that negatively regulates ODC activity and intracellular polyamine biosynthesis in response to increased intracellular polyamine levels. Binds to ODC monomers, inhibiting the assembly of the functional ODC homodimer, and targets the monomers for ubiquitin-independent proteolytic destruction by the 26S proteasome. In Schizosaccharomyces japonicus (Fission yeast), this protein is Ornithine decarboxylase antizyme (spa1).